The chain runs to 305 residues: Ribosomal RNA small subunit methyltransferase H (305 aa).

S-adenosyl-L-methionine-binding positions include 30–32 (GGH), Asp49, Phe74, Asp96, and Gln103.

It belongs to the methyltransferase superfamily. RsmH family.

Its subcellular location is the cytoplasm. It carries out the reaction cytidine(1402) in 16S rRNA + S-adenosyl-L-methionine = N(4)-methylcytidine(1402) in 16S rRNA + S-adenosyl-L-homocysteine + H(+). Its function is as follows. Specifically methylates the N4 position of cytidine in position 1402 (C1402) of 16S rRNA. The polypeptide is Ribosomal RNA small subunit methyltransferase H (Francisella tularensis subsp. novicida (strain U112)).